A 228-amino-acid chain; its full sequence is Cytochrome c oxidase subunit 2 (228 aa).

The Mitochondrial intermembrane segment spans residues 1-14 (MANHSQLGFQDASS). The helical transmembrane segment at 15 to 45 (PIMEELVEFHDHALIVALAICSLVLYLLAHM) threads the bilayer. The Mitochondrial matrix segment spans residues 46–58 (LMEKLSSNAVDAQ). Residues 59 to 86 (EVELIWTILPAIVLVLLALPSLQILYMM) form a helical membrane-spanning segment. The Mitochondrial intermembrane portion of the chain corresponds to 87-228 (DEIDEPDLTL…EAWSSLLSSS (142 aa)). H160, C195, E197, C199, H203, and M206 together coordinate Cu cation. E197 serves as a coordination point for Mg(2+).

It belongs to the cytochrome c oxidase subunit 2 family. Component of the cytochrome c oxidase (complex IV, CIV), a multisubunit enzyme composed of 14 subunits. The complex is composed of a catalytic core of 3 subunits MT-CO1, MT-CO2 and MT-CO3, encoded in the mitochondrial DNA, and 11 supernumerary subunits COX4I, COX5A, COX5B, COX6A, COX6B, COX6C, COX7A, COX7B, COX7C, COX8 and NDUFA4, which are encoded in the nuclear genome. The complex exists as a monomer or a dimer and forms supercomplexes (SCs) in the inner mitochondrial membrane with NADH-ubiquinone oxidoreductase (complex I, CI) and ubiquinol-cytochrome c oxidoreductase (cytochrome b-c1 complex, complex III, CIII), resulting in different assemblies (supercomplex SCI(1)III(2)IV(1) and megacomplex MCI(2)III(2)IV(2)). Found in a complex with TMEM177, COA6, COX18, COX20, SCO1 and SCO2. Interacts with TMEM177 in a COX20-dependent manner. Interacts with COX20. Interacts with COX16. Cu cation is required as a cofactor.

It localises to the mitochondrion inner membrane. The enzyme catalyses 4 Fe(II)-[cytochrome c] + O2 + 8 H(+)(in) = 4 Fe(III)-[cytochrome c] + 2 H2O + 4 H(+)(out). In terms of biological role, component of the cytochrome c oxidase, the last enzyme in the mitochondrial electron transport chain which drives oxidative phosphorylation. The respiratory chain contains 3 multisubunit complexes succinate dehydrogenase (complex II, CII), ubiquinol-cytochrome c oxidoreductase (cytochrome b-c1 complex, complex III, CIII) and cytochrome c oxidase (complex IV, CIV), that cooperate to transfer electrons derived from NADH and succinate to molecular oxygen, creating an electrochemical gradient over the inner membrane that drives transmembrane transport and the ATP synthase. Cytochrome c oxidase is the component of the respiratory chain that catalyzes the reduction of oxygen to water. Electrons originating from reduced cytochrome c in the intermembrane space (IMS) are transferred via the dinuclear copper A center (CU(A)) of subunit 2 and heme A of subunit 1 to the active site in subunit 1, a binuclear center (BNC) formed by heme A3 and copper B (CU(B)). The BNC reduces molecular oxygen to 2 water molecules using 4 electrons from cytochrome c in the IMS and 4 protons from the mitochondrial matrix. This is Cytochrome c oxidase subunit 2 (MT-CO2) from Anas platyrhynchos (Mallard).